A 384-amino-acid chain; its full sequence is MPQLDSGGGGAGGGDDLGAPDELLAFQDEGEEQDDKSRDSAAGPERDLAELKSSLVNESEGAAGGAGIPGVPGAGAGARGEAEALGREHAAQRLFPDKLPEPLEDGLKAPECTSGMYKETVYSAFNLLMHYPPPSGAGQHPQPQPPLHKANQPPHGVPQLSLYEHFNSPHPTPAPADISQKQVHRPLQTPDLSGFYSLTSGSMGQLPHTVSWFTHPSLMLGSGVPGHPAAIPHPAIVPPSGKQELQPFDRNLKTQAESKAEKEAKKPTIKKPLNAFMLYMKEMRAKVIAECTLKESAAINQILGRRWHALSREEQAKYYELARKERQLHMQLYPGWSARDNYGKKKRRSREKHQESTTGGKRNAFGTYPEKAAAPAPFLPMTVL.

The segment covering methionine 1–aspartate 16 has biased composition (gly residues). The tract at residues methionine 1–serine 59 is CTNNB1-binding. Disordered stretches follow at residues methionine 1 to glutamate 88, proline 133 to valine 183, and serine 337 to leucine 384. Basic and acidic residues predominate over residues aspartate 35–glutamate 50. The segment covering alanine 62–alanine 78 has biased composition (gly residues). A DNA-binding region (HMG box) is located at residues isoleucine 269–serine 337. The Nuclear localization signal motif lies at lysine 344 to arginine 348. Over residues lysine 352–glutamate 370 the composition is skewed to basic and acidic residues. Positions alanine 374 to leucine 384 are enriched in low complexity.

Belongs to the TCF/LEF family. Binds the armadillo repeat of CTNNB1 and forms a stable complex. Interacts with TLE5, TLE1, TLE2, TLE3 and TLE4. Interacts with MLLT11. Long isoform interacts (via N-terminus) with SOX13; inhibits WNT-mediated transcriptional activity. Interacts with DAZAP2. In terms of tissue distribution, predominantly expressed in T-cells. Also detected in proliferating intestinal epithelial cells and in the basal epithelial cells of mammary gland epithelium.

The protein resides in the nucleus. Functionally, transcriptional activator involved in T-cell lymphocyte differentiation. Necessary for the survival of CD4(+) CD8(+) immature thymocytes. Isoforms lacking the N-terminal CTNNB1 binding domain cannot fulfill this role. Binds to the T-lymphocyte-specific enhancer element (5'-WWCAAAG-3') found in the promoter of the CD3E gene. Represses expression of the T-cell receptor gamma gene in alpha-beta T-cell lineages. Required for the development of natural killer receptor-positive lymphoid tissue inducer T-cells. TLE1, TLE2, TLE3 and TLE4 repress transactivation mediated by TCF7 and CTNNB1. May also act as feedback transcriptional repressor of CTNNB1 and TCF7L2 target genes. This is Transcription factor 7 from Homo sapiens (Human).